A 197-amino-acid chain; its full sequence is Adenylyl-sulfate kinase (197 aa).

Residue 33–40 (GLSGSGKS) coordinates ATP. Serine 107 functions as the Phosphoserine intermediate in the catalytic mechanism.

This sequence belongs to the APS kinase family.

It carries out the reaction adenosine 5'-phosphosulfate + ATP = 3'-phosphoadenylyl sulfate + ADP + H(+). The protein operates within sulfur metabolism; hydrogen sulfide biosynthesis; sulfite from sulfate: step 2/3. In terms of biological role, catalyzes the synthesis of activated sulfate. The polypeptide is Adenylyl-sulfate kinase (Bacillus velezensis (strain DSM 23117 / BGSC 10A6 / LMG 26770 / FZB42) (Bacillus amyloliquefaciens subsp. plantarum)).